A 775-amino-acid chain; its full sequence is Cation channel sperm-associated protein subunit epsilon-like protein (775 aa).

An N-terminal signal peptide occupies residues 1 to 20 (MLARRVVAALLLWLSCCVSA). N-linked (GlcNAc...) asparagine glycosylation is found at Asn-62 and Asn-114.

It belongs to the CATSPERD family.

This chain is Cation channel sperm-associated protein subunit epsilon-like protein, found in Mus musculus (Mouse).